The primary structure comprises 505 residues: Maturase K (505 aa).

Belongs to the intron maturase 2 family. MatK subfamily.

The protein localises to the plastid. The protein resides in the chloroplast. Its function is as follows. Usually encoded in the trnK tRNA gene intron. Probably assists in splicing its own and other chloroplast group II introns. This is Maturase K from Ficus carica (Common fig).